A 267-amino-acid chain; its full sequence is Mlc titration factor A (267 aa).

Residues His-111, His-148, His-152, and Glu-211 each coordinate Zn(2+).

It belongs to the MtfA family. As to quaternary structure, interacts with Mlc. Zn(2+) serves as cofactor.

The protein localises to the cytoplasm. In terms of biological role, involved in the modulation of the activity of the glucose-phosphotransferase system (glucose-PTS). Interacts with the transcriptional repressor Mlc, preventing its interaction with DNA and leading to the modulation of expression of genes regulated by Mlc, including ptsG, which encodes the PTS system glucose-specific EIICB component. Functionally, shows zinc-dependent metallopeptidase activity. In Yersinia enterocolitica serotype O:8 / biotype 1B (strain NCTC 13174 / 8081), this protein is Mlc titration factor A.